Reading from the N-terminus, the 1115-residue chain is Integrin alpha-PS3 (1115 aa).

The signal sequence occupies residues 1–24 (MNAESTMFPHIFLALLALISHIEA). Over 25–1054 (FNFMPRPSRV…PNIISKHQET (1030 aa)) the chain is Extracellular. FG-GAP repeat units lie at residues 39 to 99 (KHLK…VCSP), 113 to 174 (SEYT…STPQ), 193 to 246 (DNGN…VDNP), 278 to 335 (IPTP…GKSI), 336 to 397 (HKYH…FNFE), 398 to 453 (RQIL…GLRD), and 460 to 522 (DAPS…SESR). 3 N-linked (GlcNAc...) asparagine glycosylation sites follow: Asn46, Asn82, and Asn166. Asn438 is a glycosylation site (N-linked (GlcNAc...) asparagine). 4 N-linked (GlcNAc...) asparagine glycosylation sites follow: Asn696, Asn845, Asn868, and Asn964. The chain crosses the membrane as a helical span at residues 1055–1075 (GLPIWIIIVSVIGGLLLLSAI). Residues 1076–1115 (SYLLYKFGFFNRTKKDELDRLVQQNPVEPEAENLNSGGNN) lie on the Cytoplasmic side of the membrane.

It belongs to the integrin alpha chain family. Heterodimer of an alpha and a beta subunit. The alpha subunit is composed of a heavy and a light chain linked by a disulfide bond. Interacts with mys/beta-PS and Itgbn. Expressed in embryonic and larval hemocytes (at protein level). Expressed in tissues undergoing invagination, tissue movement and morphogenesis such as salivary gland, trachea, midgut endoderm, dorsal vessel, midline of the ventral nerve cord, amnioserosa and the amnioproctodeal invagination. Expressed in the mushroom body neuropil, brain areas that contain mushroom body processes in synaptic contact with other neurons. In egg chambers, expressed in border cells, in stretch cells and in dorsal appendage primordia.

Its subcellular location is the apical cell membrane. The protein localises to the lateral cell membrane. It localises to the cytoplasm. Functionally, integrin alpha-PS3/beta-PS is a receptor for laminin. Also binds to wb. Important during embryogenesis for the development of the trachea, dorsal vessel and salivary gland, as well as for dorsal closure. Required for short-term memory processes. Minor involvement in the establishment of the oocyte anterior-posterior length. Plays a role in timely border cell migration during oogenesis, probably mediated by JNK signaling. Integrin alpha-PS3/Itgbn is required for effective phagocytosis of apoptotic cells during embryonic development and for the phagocytic elimination of S.aureus by mediating the binding of S.aureus peptidoglycan to larval hemocytes, which probably activates a signaling pathway involving Rac1 and Rac2. Integrin alpha-PS3/Itgbn also regulates Fak activity during neuromuscular junction (NMJ) growth and is required for its activation in presynapsis of NMJs. Seems to be dispensable for major morphogenetic processes. The chain is Integrin alpha-PS3 (scb) from Drosophila melanogaster (Fruit fly).